Reading from the N-terminus, the 236-residue chain is MSNQQNDAKRAAARRVIQDFVFDGMTLGLGSGTTSHFFVRELGQHVAKGLQLTCTTTSRATSEVARDVGIELSDPNEMNEIDLTIDGPDEIDRRFNMIKGGGACLLWEKIIAHASKRMICICDETKIVNCLGQFPLPVEIVPFAWKQTERRVERVLAEQGLHHVPIIRRMGGGHPVITDSGNFILDCHCGAIITAPEPLEIELNRIPGVVENGLFTREATGMVVGYFDGSSYVQLR.

Residues 31–34 (SGTT), 86–89 (DGPD), and 99–102 (KGGG) each bind substrate. The active-site Proton acceptor is the Glu108. Lys126 is a binding site for substrate.

The protein belongs to the ribose 5-phosphate isomerase family. In terms of assembly, homodimer.

It carries out the reaction aldehydo-D-ribose 5-phosphate = D-ribulose 5-phosphate. The protein operates within carbohydrate degradation; pentose phosphate pathway; D-ribose 5-phosphate from D-ribulose 5-phosphate (non-oxidative stage): step 1/1. Functionally, catalyzes the reversible conversion of ribose-5-phosphate to ribulose 5-phosphate. This chain is Ribose-5-phosphate isomerase A 2, found in Yersinia pestis.